Reading from the N-terminus, the 47-residue chain is PhoP/PhoQ regulator MgrB (47 aa).

Residues 6-26 (WAILLAVLVACLLLWMQTLNV) traverse the membrane as a helical segment.

The protein belongs to the MgrB family. May form homooligomers. Probably interacts with the periplasmic domain of PhoQ.

The protein localises to the cell inner membrane. In terms of biological role, phoP-regulated transcription is redox-sensitive, being activated when the periplasm becomes more reducing. MgrB acts between DsbA/DsbB and PhoP/PhoQ in this pathway. Represses PhoP/PhoQ signaling, possibly by binding to the periplasmic domain of PhoQ, altering its activity and that of downstream effector PhoP. The polypeptide is PhoP/PhoQ regulator MgrB (Cronobacter sakazakii (strain ATCC BAA-894) (Enterobacter sakazakii)).